We begin with the raw amino-acid sequence, 152 residues long: Protein eva-1 homolog A (152 aa).

Residues 1–60 are necessary for the localization and biological activity; it reads MRLPLSHSPEHVEMALLSNILAAYSFVSENPERAALYFVSGVCIGLVLTLAALVIRISCH. The helical transmembrane segment at 35-55 threads the bilayer; the sequence is ALYFVSGVCIGLVLTLAALVI. The disordered stretch occupies residues 70-97; it reads KFLQDRESSSDSSDSEDGSEDTVSDLSV. Residues 82–92 show a composition bias toward acidic residues; it reads SDSEDGSEDTV. A Phosphothreonine modification is found at threonine 106. At serine 114 the chain carries Phosphoserine; by FAM20C.

The protein belongs to the EVA1 family. As to expression, expressed in lung, kidney, liver, pancreas, placenta, but not in heart and skeletal muscle.

It localises to the endoplasmic reticulum membrane. It is found in the lysosome membrane. Its function is as follows. Acts as a regulator of programmed cell death, mediating both autophagy and apoptosis. This is Protein eva-1 homolog A (EVA1A) from Homo sapiens (Human).